An 89-amino-acid polypeptide reads, in one-letter code: Small ribosomal subunit protein uS15 (89 aa).

It belongs to the universal ribosomal protein uS15 family. Part of the 30S ribosomal subunit. Forms a bridge to the 50S subunit in the 70S ribosome, contacting the 23S rRNA.

Its function is as follows. One of the primary rRNA binding proteins, it binds directly to 16S rRNA where it helps nucleate assembly of the platform of the 30S subunit by binding and bridging several RNA helices of the 16S rRNA. In terms of biological role, forms an intersubunit bridge (bridge B4) with the 23S rRNA of the 50S subunit in the ribosome. The polypeptide is Small ribosomal subunit protein uS15 (Nitratidesulfovibrio vulgaris (strain DP4) (Desulfovibrio vulgaris)).